Here is a 98-residue protein sequence, read N- to C-terminus: uncharacterized protein (98 aa).

Positions 1–23 (MKYVALAFVLSLVILQISAQVGA) are cleaved as a signal peptide.

In terms of tissue distribution, nacreous layer of shell (at protein level). Expressed primarily in the mantle with highest level in the mantle pallium and lower level in the mantle edge.

The protein resides in the secreted. This is an uncharacterized protein from Pinctada maxima (Silver-lipped pearl oyster).